The sequence spans 893 residues: Zinc finger protein 281 (893 aa).

4 disordered regions span residues 1–113 (MKIG…FPSQ), 126–148 (IKQE…HHHY), 153–172 (AGAE…SHGV), and 198–251 (SGSR…GAVL). K2 is covalently cross-linked (Glycyl lysine isopeptide (Lys-Gly) (interchain with G-Cter in SUMO2)). Positions 7-36 (FLSGGGGPSSSGGSGSGGSSGSASGGSGGG) are enriched in gly residues. Residues K100 and K127 each participate in a glycyl lysine isopeptide (Lys-Gly) (interchain with G-Cter in SUMO2) cross-link. Positions 127–139 (KQEKPADPEEQPS) are enriched in basic and acidic residues. The span at 161–170 (GLGGGEGGSH) shows a compositional bias: gly residues. Over residues 201 to 216 (RTDEHGNQEPKQDANV) the composition is skewed to basic and acidic residues. Residues K211, K217, K223, K230, K240, and K256 each participate in a glycyl lysine isopeptide (Lys-Gly) (interchain with G-Cter in SUMO2) cross-link. C2H2-type zinc fingers lie at residues 258 to 280 (HICD…VLIH), 286 to 308 (FQCS…EKIH), and 314 to 336 (FGCD…KRTH). Residues K298 and K322 each participate in a glycyl lysine isopeptide (Lys-Gly) (interchain with G-Cter in SUMO2) cross-link. Residues 342-364 (YKCDTCQQYFSRTDRLLKHRRTC) form a C2H2-type 4; atypical zinc finger. K370 is covalently cross-linked (Glycyl lysine isopeptide (Lys-Gly) (interchain with G-Cter in SUMO2)). The interval 371–425 (GAASAEPGSSNHNSMGNLAVLSQGNTSSSRRKSKSKSIAIENKEHKTGKTNESQM) is disordered. Residues 377–396 (PGSSNHNSMGNLAVLSQGNT) are compositionally biased toward polar residues. S392 is subject to Phosphoserine. Residues K406, K413, K457, and K474 each participate in a glycyl lysine isopeptide (Lys-Gly) (interchain with G-Cter in SUMO2) cross-link. S481 carries the phosphoserine modification. Glycyl lysine isopeptide (Lys-Gly) (interchain with G-Cter in SUMO2) cross-links involve residues K490, K495, K536, K596, K614, and K619. A disordered region spans residues 613–658 (GKSETQKEDPFNLTEPRVDLHTSGEHSELVQEENLSPGTQTPSNDK). The segment covering 616 to 641 (ETQKEDPFNLTEPRVDLHTSGEHSEL) has biased composition (basic and acidic residues). Residues 645–658 (ENLSPGTQTPSNDK) are compositionally biased toward polar residues. S648 carries the post-translational modification Phosphoserine. Glycyl lysine isopeptide (Lys-Gly) (interchain with G-Cter in SUMO2) cross-links involve residues K658 and K667. The span at 775–813 (SSAFQSSSQKLTSQKEQQKNLESSTSFQIPSQELASQID) shows a compositional bias: polar residues. Residues 775–815 (SSAFQSSSQKLTSQKEQQKNLESSTSFQIPSQELASQIDPQ) are disordered. S782 carries the post-translational modification Phosphoserine. Glycyl lysine isopeptide (Lys-Gly) (interchain with G-Cter in SUMO2) cross-links involve residues K784, K789, and K793. S805 carries the post-translational modification Phosphoserine. Residues K816 and K838 each participate in a glycyl lysine isopeptide (Lys-Gly) (interchain with G-Cter in SUMO2) cross-link. The residue at position 886 (T886) is a Phosphothreonine.

Belongs to the krueppel C2H2-type zinc-finger protein family. In terms of assembly, interacts with NANOG. Associates with the NuRD complex.

It is found in the nucleus. Transcription repressor that plays a role in regulation of embryonic stem cells (ESCs) differentiation. Required for ESCs differentiation and acts by mediating autorepression of NANOG in ESCs: binds to the NANOG promoter and promotes association of NANOG protein to its own promoter and recruits the NuRD complex, which deacetylates histones. Not required for establishement and maintenance of ESCs. Represses the transcription of a number of genes including GAST, ODC1 and VIM. Binds to the G-rich box in the enhancer region of these genes. The chain is Zinc finger protein 281 (Znf281) from Mus musculus (Mouse).